A 78-amino-acid chain; its full sequence is Small ribosomal subunit protein uS17 (78 aa).

The protein belongs to the universal ribosomal protein uS17 family. As to quaternary structure, part of the 30S ribosomal subunit.

Its function is as follows. One of the primary rRNA binding proteins, it binds specifically to the 5'-end of 16S ribosomal RNA. The protein is Small ribosomal subunit protein uS17 of Maricaulis maris (strain MCS10) (Caulobacter maris).